The primary structure comprises 230 residues: Inactive 2-(S)-hydroxypropyl-CoM dehydrogenase 2 (230 aa).

This sequence belongs to the short-chain dehydrogenases/reductases (SDR) family.

In Xanthobacter autotrophicus (strain ATCC BAA-1158 / Py2), this protein is Inactive 2-(S)-hydroxypropyl-CoM dehydrogenase 2.